The following is a 438-amino-acid chain: Protein DSE3 (438 aa).

The protein resides in the bud neck. Its function is as follows. May be involved in the establishment of the daughter fate. This is Protein DSE3 (DSE3) from Candida glabrata (strain ATCC 2001 / BCRC 20586 / JCM 3761 / NBRC 0622 / NRRL Y-65 / CBS 138) (Yeast).